Reading from the N-terminus, the 159-residue chain is Short coiled-coil protein (159 aa).

Positions 78–146 (MMNADMDAVD…QYIENLMSAS (69 aa)) form a coiled coil.

It belongs to the SCOC family. In terms of assembly, homodimer. Interacts with ARL1, ARL2 and ARL3. Directly interacts with FEZ1 and UVRAG. The interaction with UVRAG is reduced by amino acid starvation, but the complex is stabilized in the presence of FEZ1. Interacts with NRBF2. Widely expressed with highest levels in brain, heart and skeletal muscle.

It localises to the golgi apparatus membrane. Its subcellular location is the golgi apparatus. The protein localises to the trans-Golgi network. The protein resides in the cytoplasm. It is found in the cytosol. Positive regulator of amino acid starvation-induced autophagy. The chain is Short coiled-coil protein (SCOC) from Homo sapiens (Human).